The primary structure comprises 74 residues: Sodium channel neurotoxin MeuNaTxalpha-11 (74 aa).

The signal sequence occupies residues 1 to 7 (LMTGVES). Residues 9-73 (RDAYIAKPHN…VPIRIPGKCH (65 aa)) form the LCN-type CS-alpha/beta domain. Intrachain disulfides connect Cys19–Cys72, Cys23–Cys45, Cys31–Cys55, and Cys35–Cys57. A propeptide (removed by a carboxypeptidase) is located at residue Arg74.

The protein belongs to the long (4 C-C) scorpion toxin superfamily. Sodium channel inhibitor family. Alpha subfamily. As to expression, expressed by the venom gland.

It is found in the secreted. Alpha toxins bind voltage-independently at site-3 of sodium channels (Nav) and inhibit the inactivation of the activated channels, thereby blocking neuronal transmission. The chain is Sodium channel neurotoxin MeuNaTxalpha-11 from Mesobuthus eupeus (Lesser Asian scorpion).